Here is a 185-residue protein sequence, read N- to C-terminus: Thiol:disulfide interchange protein DsbE (185 aa).

Topologically, residues 1-4 are cytoplasmic; the sequence is MKRN. A helical membrane pass occupies residues 5-25; that stretch reads VLLLPLLIFLLIAAALLWQLA. Over 26-185 the chain is Periplasmic; that stretch reads RNAQGDDPTN…WDRYSREAAQ (160 aa). The region spanning 39 to 177 is the Thioredoxin domain; sequence ALTGKPVPAF…WESELKPLWD (139 aa). Cysteines 80 and 83 form a disulfide.

Belongs to the thioredoxin family. DsbE subfamily.

The protein resides in the cell inner membrane. Involved in disulfide bond formation. Catalyzes a late, reductive step in the assembly of periplasmic c-type cytochromes, probably the reduction of disulfide bonds of the apocytochrome c to allow covalent linkage with the heme. Possible subunit of a heme lyase. This is Thiol:disulfide interchange protein DsbE (dsbE1) from Salmonella typhi.